The sequence spans 172 residues: Translocon-associated protein subunit delta (172 aa).

The signal sequence occupies residues 1–23 (MAAMASFGALALLLLSGLSCCSE). The Lumenal portion of the chain corresponds to 24 to 143 (ACLEPQITPS…SVDHRGTWNG (120 aa)). C25 and C56 are disulfide-bonded. K72 is covalently cross-linked (Glycyl lysine isopeptide (Lys-Gly) (interchain with G-Cter in ubiquitin)). Residues 144 to 164 (PWVSTEVLAAVIGIVIYYLAF) form a helical membrane-spanning segment. The Cytoplasmic segment spans residues 165–172 (SAKSHIQA).

This sequence belongs to the TRAP-delta family. In terms of assembly, heterotetramer of TRAP-alpha, TRAP-beta, TRAP-delta and TRAP-gamma.

The protein localises to the endoplasmic reticulum membrane. TRAP proteins are part of a complex whose function is to bind calcium to the ER membrane and thereby regulate the retention of ER resident proteins. In Mus musculus (Mouse), this protein is Translocon-associated protein subunit delta (Ssr4).